A 271-amino-acid polypeptide reads, in one-letter code: Acyl-[acyl-carrier-protein]--UDP-N-acetylglucosamine O-acyltransferase (271 aa).

Belongs to the transferase hexapeptide repeat family. LpxA subfamily. As to quaternary structure, homotrimer.

It localises to the cytoplasm. It catalyses the reaction a (3R)-hydroxyacyl-[ACP] + UDP-N-acetyl-alpha-D-glucosamine = a UDP-3-O-[(3R)-3-hydroxyacyl]-N-acetyl-alpha-D-glucosamine + holo-[ACP]. It participates in glycolipid biosynthesis; lipid IV(A) biosynthesis; lipid IV(A) from (3R)-3-hydroxytetradecanoyl-[acyl-carrier-protein] and UDP-N-acetyl-alpha-D-glucosamine: step 1/6. In terms of biological role, involved in the biosynthesis of lipid A, a phosphorylated glycolipid that anchors the lipopolysaccharide to the outer membrane of the cell. In Azorhizobium caulinodans (strain ATCC 43989 / DSM 5975 / JCM 20966 / LMG 6465 / NBRC 14845 / NCIMB 13405 / ORS 571), this protein is Acyl-[acyl-carrier-protein]--UDP-N-acetylglucosamine O-acyltransferase.